A 247-amino-acid chain; its full sequence is Chaperone protein NfaE (247 aa).

Positions 1–29 (MKMRAVAVFTGMLTGVLSVTGLLSAGAYA) are cleaved as a signal peptide. Residues 106 to 125 (GQQSSRRRSVSTGGEFPSDR) are disordered.

The protein belongs to the periplasmic pilus chaperone family.

It localises to the periplasm. In terms of biological role, involved in the biogenesis of the NFA-I adhesin. In Escherichia coli, this protein is Chaperone protein NfaE (nfaE).